The sequence spans 354 residues: Type II secretion system protein K (354 aa).

The propeptide at 1–7 (MSRRQRG) is leader sequence. The chain crosses the membrane as a helical span at residues 8–28 (VALLIVMLMLSLMVTIAASIT). At 29–354 (ERSGKAWQRT…QYGGYRTVNP (326 aa)) the chain is on the periplasmic side. The disordered stretch occupies residues 114-151 (NVTPNNASGNNTSGNNNAANGSSGNGNSPQPPKVGTSE). Residues 118–141 (NNASGNNTSGNNNAANGSSGNGNS) are compositionally biased toward low complexity.

Belongs to the GSP K family. In terms of assembly, type II secretion is composed of four main components: the outer membrane complex, the inner membrane complex, the cytoplasmic secretion ATPase and the periplasm-spanning pseudopilus. Interacts with core component OutG. Cleaved by prepilin peptidase.

Its subcellular location is the cell inner membrane. Component of the type II secretion system required for the energy-dependent secretion of extracellular factors such as proteases and toxins from the periplasm. Plays a role in pseudopilus assembly and seems to control its length. Interacts with the pseudopilus tip complex that is critical for the recognition and binding of secretion substrates. This Dickeya chrysanthemi (Pectobacterium chrysanthemi) protein is Type II secretion system protein K (outK).